The chain runs to 398 residues: Phosphoglycerate kinase (398 aa).

Substrate is bound by residues Asp-21–Asn-23, Arg-36, His-59–Arg-62, Arg-119, and Arg-157. Residues Lys-208, Gly-296, Glu-327, and Gly-354–Ser-357 contribute to the ATP site.

The protein belongs to the phosphoglycerate kinase family. As to quaternary structure, monomer.

The protein localises to the cytoplasm. It catalyses the reaction (2R)-3-phosphoglycerate + ATP = (2R)-3-phospho-glyceroyl phosphate + ADP. It participates in carbohydrate degradation; glycolysis; pyruvate from D-glyceraldehyde 3-phosphate: step 2/5. In Streptococcus pyogenes serotype M5 (strain Manfredo), this protein is Phosphoglycerate kinase.